The primary structure comprises 61 residues: Transmembrane protein 300R (61 aa).

2 consecutive transmembrane segments (helical) span residues 5–25 (FLDLYMILSVLAGVIGIFYLT) and 35–55 (SLSYYMTLSVVTGILALIYLQ).

It localises to the membrane. The protein is Transmembrane protein 300R of Invertebrate iridescent virus 6 (IIV-6).